The chain runs to 494 residues: Tripartite motif-containing protein 5 (494 aa).

A2 is subject to N-acetylalanine. The RING-type zinc-finger motif lies at 15–59 (CPICLELLTQPLSLDCGHSFCQACLTANHKTSMPDEGERSCPVCR). A Phosphoserine modification is found at S86. Residues 91–133 (QKVDHCARHGEKLLLFCQEDRKVICWLCERSQEHRGHHTFLTE) form a B box-type zinc finger. Zn(2+)-binding residues include C96, H99, C118, and H124. Residues 132 to 241 (TEEVAQEYQV…LISDLEHRLQ (110 aa)) are a coiled coil. The interval 186-199 (FEQLRHILDWVESN) is required for interaction with GABARAP and for autophagy. The B30.2/SPRY domain maps to 282 to 494 (LKVMLEVLRE…VPMTLCSPSS (213 aa)).

It belongs to the TRIM/RBCC family. In terms of assembly, can form homodimers and homotrimers. In addition to lower-order dimerization, also exhibits a higher-order multimerization and both low- and high-order multimerizations are essential for its restriction activity. Interacts with BTBD1 and BTBD2. Interacts with PSMC4, PSMC5, PSMD7 and HSPA8/HSC70. Interacts (via B30.2/SPRY domain) with HSPA1A/B. Interacts with PSMC2, MAP3K7/TAK1, TAB2 and TAB3. Interacts with SQSTM1. Interacts with TRIM6 and TRIM34. Interacts with ULK1 (phosphorylated form), GABARAP, GABARAPL1, GABARAPL2, MAP1LC3A, MAP1LC3C and BECN1. Post-translationally, degraded in a proteasome-independent fashion in the absence of viral infection but in a proteasome-dependent fashion following exposure to restriction sensitive virus. Autoubiquitinated in a RING finger- and UBE2D2-dependent manner. Monoubiquitinated by TRIM21. Deubiquitinated by Yersinia YopJ. Ubiquitination may not lead to proteasomal degradation.

The protein resides in the cytoplasm. It localises to the nucleus. The enzyme catalyses S-ubiquitinyl-[E2 ubiquitin-conjugating enzyme]-L-cysteine + [acceptor protein]-L-lysine = [E2 ubiquitin-conjugating enzyme]-L-cysteine + N(6)-ubiquitinyl-[acceptor protein]-L-lysine.. It functions in the pathway protein modification; protein ubiquitination. In terms of biological role, capsid-specific restriction factor that prevents infection from non-host-adapted retroviruses. Blocks viral replication early in the life cycle, after viral entry but before reverse transcription. In addition to acting as a capsid-specific restriction factor, also acts as a pattern recognition receptor that activates innate immune signaling in response to the retroviral capsid lattice. Binding to the viral capsid triggers its E3 ubiquitin ligase activity, and in concert with the heterodimeric ubiquitin conjugating enzyme complex UBE2V1-UBE2N (also known as UBC13-UEV1A complex) generates 'Lys-63'-linked polyubiquitin chains, which in turn are catalysts in the autophosphorylation of the MAP3K7/TAK1 complex (includes TAK1, TAB2, and TAB3). Activation of the MAP3K7/TAK1 complex by autophosphorylation results in the induction and expression of NF-kappa-B and MAPK-responsive inflammatory genes, thereby leading to an innate immune response in the infected cell. Plays a role in regulating autophagy through activation of autophagy regulator BECN1 by causing its dissociation from its inhibitors BCL2 and TAB2. This is Tripartite motif-containing protein 5 (TRIM5) from Symphalangus syndactylus (Siamang).